The primary structure comprises 340 residues: Fructose-1,6-bisphosphatase class 1 (340 aa).

Positions 107, 126, 128, and 129 each coordinate Mg(2+). A substrate-binding site is contributed by Asn-215. Residue Glu-287 participates in Mg(2+) binding.

This sequence belongs to the FBPase class 1 family. In terms of assembly, homotetramer. Requires Mg(2+) as cofactor.

It is found in the cytoplasm. The enzyme catalyses beta-D-fructose 1,6-bisphosphate + H2O = beta-D-fructose 6-phosphate + phosphate. Its pathway is carbohydrate biosynthesis; gluconeogenesis. In Brucella anthropi (strain ATCC 49188 / DSM 6882 / CCUG 24695 / JCM 21032 / LMG 3331 / NBRC 15819 / NCTC 12168 / Alc 37) (Ochrobactrum anthropi), this protein is Fructose-1,6-bisphosphatase class 1.